Here is a 591-residue protein sequence, read N- to C-terminus: Serine/threonine-protein phosphatase PP2A 65 kDa regulatory subunit (591 aa).

Ala-2 is modified (N-acetylalanine). HEAT repeat units follow at residues Asp-10 to Arg-48, Thr-49 to Glu-86, Phe-87 to Asp-125, Leu-126 to Pro-163, Val-164 to Tyr-202, Leu-203 to Asp-241, Val-242 to Ile-280, Thr-281 to Ile-323, Ile-324 to Gln-362, Thr-363 to Gln-401, Leu-402 to Phe-440, Phe-441 to Trp-479, Ala-480 to Ile-518, Thr-519 to Val-557, and Ile-558 to Ala-591.

This sequence belongs to the phosphatase 2A regulatory subunit A family. PP2A exists in several trimeric forms, all of which consist of a core composed of a catalytic subunit associated with a 65 kDa regulatory subunit (PR65) (subunit A). The core complex associates with a third, variable subunit (subunit B), which confers distinct properties to the holoenzyme. Interacts with the inorganic phosphate transporter PXo (CG10483). Component of the Integrator-PP2A (INTAC) complex, composed of the Integrator core complex and protein phosphatase 2A subunits mts/PP2A and Pp2A-29B. Expression varies in tissues throughout development. Highly distributed expression in early embryos. In late embryonal development, found at high levels in nervous system and gonads. In third instar larvae, found in brain, imaginal disks and salivary glands.

The protein localises to the nucleus. Its function is as follows. The PR65 subunit of protein phosphatase 2A serves as a scaffolding molecule to coordinate the assembly of the catalytic subunit and a variable regulatory B subunit. Key mediator of a quality checkpoint during transcription elongation as part of the Integrator-PP2A (INTAC) complex. The INTAC complex drives premature transcription termination of transcripts that are unfavorably configured for transcriptional elongation: within the INTAC complex, acts as a scaffolding subunit for mts/PP2A, which catalyzes dephosphorylation of the C-terminal domain (CTD) of Pol II subunit POLR2A/RPB1 and Spt5, thereby preventing transcriptional elongation. This chain is Serine/threonine-protein phosphatase PP2A 65 kDa regulatory subunit (Pp2A-29B), found in Drosophila melanogaster (Fruit fly).